The following is a 167-amino-acid chain: Phospholipase A2 (167 aa).

A signal peptide spans 1 to 18; that stretch reads MQVVLGSLFLLLLSTSHG. A propeptide spanning residues 19-33 is cleaved from the precursor; that stretch reads WQIRDRIGDNELEER. 3 residues coordinate Ca(2+): W41, G43, and G45. 5 cysteine pairs are disulfide-bonded: C42–C64, C63–C103, C70–C96, C94–C128, and C138–C146. N46 is a glycosylation site (N-linked (GlcNAc...) asparagine). H67 is a catalytic residue. D68 is a binding site for Ca(2+). The active site involves D97.

It belongs to the phospholipase A2 family. Group III subfamily. Requires Ca(2+) as cofactor. Post-translationally, N-glycosylated; contains mannose, N-acetylglucosamine and fucose alphal-6 and/or alphal-3 linked to the innermost N-acetylglucosamine. Expressed by the venom gland.

It localises to the secreted. The catalysed reaction is a 1,2-diacyl-sn-glycero-3-phosphocholine + H2O = a 1-acyl-sn-glycero-3-phosphocholine + a fatty acid + H(+). Functionally, in vivo, intraplantar injection in mice cause spontaneous pain behaviors and paw swelling. PLA2 catalyzes the calcium-dependent hydrolysis of the 2-acyl groups in 3-sn-phosphoglycerides. The chain is Phospholipase A2 from Apis mellifera (Honeybee).